The primary structure comprises 26 residues: Metallothionein (26 aa).

The segment covering 1-14 has biased composition (low complexity); the sequence is MGDCGCSGASSCNC. Residues 1 to 26 form a disordered region; it reads MGDCGCSGASSCNCGSGCSCSNCGSK. Positions 4, 6, 12, 14, 18, 20, and 23 each coordinate Cu(+). Over residues 15–26 the composition is skewed to cys residues; sequence GSGCSCSNCGSK.

This sequence belongs to the metallothionein superfamily. Type 8 family.

This chain is Metallothionein (cmt), found in Neurospora crassa (strain ATCC 24698 / 74-OR23-1A / CBS 708.71 / DSM 1257 / FGSC 987).